We begin with the raw amino-acid sequence, 500 residues long: Beta-xylosidase (500 aa).

E160 functions as the Proton donor in the catalytic mechanism. Catalysis depends on E277, which acts as the Nucleophile.

This sequence belongs to the glycosyl hydrolase 39 family.

It catalyses the reaction Hydrolysis of (1-&gt;4)-beta-D-xylans, to remove successive D-xylose residues from the non-reducing termini.. The chain is Beta-xylosidase (xynB) from Thermoanaerobacterium saccharolyticum (strain DSM 8691 / JW/SL-YS485).